Here is a 333-residue protein sequence, read N- to C-terminus: Adenosine deaminase (333 aa).

Zn(2+) is bound by residues H12 and H14. 3 residues coordinate substrate: H14, D16, and G170. H197 lines the Zn(2+) pocket. E200 (proton donor) is an active-site residue. D278 contributes to the Zn(2+) binding site. A substrate-binding site is contributed by D279.

Belongs to the metallo-dependent hydrolases superfamily. Adenosine and AMP deaminases family. Adenosine deaminase subfamily. Zn(2+) is required as a cofactor.

The enzyme catalyses adenosine + H2O + H(+) = inosine + NH4(+). It carries out the reaction 2'-deoxyadenosine + H2O + H(+) = 2'-deoxyinosine + NH4(+). Its function is as follows. Catalyzes the hydrolytic deamination of adenosine and 2-deoxyadenosine. The chain is Adenosine deaminase from Shigella dysenteriae serotype 1 (strain Sd197).